A 781-amino-acid polypeptide reads, in one-letter code: Protein argonaute (781 aa).

Residues 110 to 194 (SMNELLTERR…RHNDYCNSVM (85 aa)) enclose the PAZ domain. Residues 436-760 (LVVIVIPGPK…LSKFCGEVLR (325 aa)) enclose the Piwi domain.

Belongs to the argonaute family. Ago subfamily. In terms of assembly, interacts with miR2. Highly specific binding to the mRNA m7G-cap. May be a component of the RNA-induced silencing complex (RISC), a sequence-specific, multicomponent nuclease that destroys or silences messenger RNAs homologous to the silencing trigger.

Its subcellular location is the cytoplasm. Plays an essential role in growth and, with Dicer, also involved in microRNA (miRNA)-mediated translational repression. The RNA interference pathway is implicated in antigenic variation having a role in regulation of variant-specific surface protein (VSP)-coding gene expression. Several VSP genes are transcribed but only transcripts encoding the VSP to be expressed accumulate. Antisense RNAs corresponding to the silenced VSP genes are detected. This Giardia intestinalis (Giardia lamblia) protein is Protein argonaute.